The chain runs to 352 residues: Holliday junction branch migration complex subunit RuvB (352 aa).

Residues T5–Y191 form a large ATPase domain (RuvB-L) region. ATP contacts are provided by residues L30, R31, G72, K75, T76, T77, E138–Y140, R181, Y191, and R228. Residue T76 coordinates Mg(2+). Residues T192 to D262 form a small ATPAse domain (RuvB-S) region. A head domain (RuvB-H) region spans residues P265–Q352. Residues R301, R320, and R325 each contribute to the DNA site.

It belongs to the RuvB family. In terms of assembly, homohexamer. Forms an RuvA(8)-RuvB(12)-Holliday junction (HJ) complex. HJ DNA is sandwiched between 2 RuvA tetramers; dsDNA enters through RuvA and exits via RuvB. An RuvB hexamer assembles on each DNA strand where it exits the tetramer. Each RuvB hexamer is contacted by two RuvA subunits (via domain III) on 2 adjacent RuvB subunits; this complex drives branch migration. In the full resolvosome a probable DNA-RuvA(4)-RuvB(12)-RuvC(2) complex forms which resolves the HJ.

It is found in the cytoplasm. It carries out the reaction ATP + H2O = ADP + phosphate + H(+). Functionally, the RuvA-RuvB-RuvC complex processes Holliday junction (HJ) DNA during genetic recombination and DNA repair, while the RuvA-RuvB complex plays an important role in the rescue of blocked DNA replication forks via replication fork reversal (RFR). RuvA specifically binds to HJ cruciform DNA, conferring on it an open structure. The RuvB hexamer acts as an ATP-dependent pump, pulling dsDNA into and through the RuvAB complex. RuvB forms 2 homohexamers on either side of HJ DNA bound by 1 or 2 RuvA tetramers; 4 subunits per hexamer contact DNA at a time. Coordinated motions by a converter formed by DNA-disengaged RuvB subunits stimulates ATP hydrolysis and nucleotide exchange. Immobilization of the converter enables RuvB to convert the ATP-contained energy into a lever motion, pulling 2 nucleotides of DNA out of the RuvA tetramer per ATP hydrolyzed, thus driving DNA branch migration. The RuvB motors rotate together with the DNA substrate, which together with the progressing nucleotide cycle form the mechanistic basis for DNA recombination by continuous HJ branch migration. Branch migration allows RuvC to scan DNA until it finds its consensus sequence, where it cleaves and resolves cruciform DNA. The protein is Holliday junction branch migration complex subunit RuvB of Herminiimonas arsenicoxydans.